Reading from the N-terminus, the 265-residue chain is Phosphate import ATP-binding protein PstB (265 aa).

The ABC transporter domain maps to 11–260 (VSADEVKIAA…PRDPRTESYI (250 aa)). 50-57 (GPSGCGKS) lines the ATP pocket.

This sequence belongs to the ABC transporter superfamily. Phosphate importer (TC 3.A.1.7) family. The complex is composed of two ATP-binding proteins (PstB), two transmembrane proteins (PstC and PstA) and a solute-binding protein (PstS).

It localises to the cell inner membrane. The catalysed reaction is phosphate(out) + ATP + H2O = ADP + 2 phosphate(in) + H(+). Its function is as follows. Part of the ABC transporter complex PstSACB involved in phosphate import. Responsible for energy coupling to the transport system. The polypeptide is Phosphate import ATP-binding protein PstB (Cereibacter sphaeroides (strain ATCC 17023 / DSM 158 / JCM 6121 / CCUG 31486 / LMG 2827 / NBRC 12203 / NCIMB 8253 / ATH 2.4.1.) (Rhodobacter sphaeroides)).